Reading from the N-terminus, the 180-residue chain is Ribulose bisphosphate carboxylase small subunit, chloroplastic 2 (180 aa).

Residues 1 to 56 (MASMISSSAVTTVSRASRGQSAAVAPFGGLKSMTGFPVKKVNTDITSITSNGGRVK) constitute a chloroplast transit peptide.

This sequence belongs to the RuBisCO small chain family. Heterohexadecamer of 8 large and 8 small subunits.

The protein localises to the plastid. It is found in the chloroplast. In terms of biological role, ruBisCO catalyzes two reactions: the carboxylation of D-ribulose 1,5-bisphosphate, the primary event in carbon dioxide fixation, as well as the oxidative fragmentation of the pentose substrate. Both reactions occur simultaneously and in competition at the same active site. Although the small subunit is not catalytic it is essential for maximal activity. This is Ribulose bisphosphate carboxylase small subunit, chloroplastic 2 from Pisum sativum (Garden pea).